We begin with the raw amino-acid sequence, 300 residues long: MPETPIDPDLTAQVLVEALPYIRRFRGKTIVVKFGGNAMVDEALKVAFARDIVLMRLVGFRVVVVHGGGPQIGNLLERIGKETEFVQGMRVTDAETMDVVEMVLGGLVNKEIVNLISAQGGRAVGLTGKDGGLIRARKLEVEQPGPENQVPEIIDIGHVGEVDHIDPAVVEMLDSGEFIPVVAPIGVDERGTSYNINADLVAGKIAEVLSAEKLLLLTNTPGVLDGAGHLLTGLSPERVDELIADGTIAGGMLPKIRCALDAVAGGVRNAHIIDGRVPHAVLLELFTDKGVGTLIRRQPE.

Residues 68–69, R90, and N195 contribute to the substrate site; that span reads GG.

The protein belongs to the acetylglutamate kinase family. ArgB subfamily.

It localises to the cytoplasm. It carries out the reaction N-acetyl-L-glutamate + ATP = N-acetyl-L-glutamyl 5-phosphate + ADP. Its pathway is amino-acid biosynthesis; L-arginine biosynthesis; N(2)-acetyl-L-ornithine from L-glutamate: step 2/4. Its function is as follows. Catalyzes the ATP-dependent phosphorylation of N-acetyl-L-glutamate. The chain is Acetylglutamate kinase from Halorhodospira halophila (strain DSM 244 / SL1) (Ectothiorhodospira halophila (strain DSM 244 / SL1)).